The chain runs to 575 residues: MQLRDLAPRSPNVAAPPYNGLPPPHLLLGYQAMHRALNDYLFDNRVFMQIGYDSPPQRPRRLFWTCLTDCSYAVNVGQYMRFLDLDNFHGTFTQMHNAVLMDRVAADMGRAHLRGRGIDVGRHGQVLPQLDAEHHSLLSGNGAGGLQEGVLMRTASAADAELLAAIRQLRVALCHYLFCYAYDLFQTEERYRFLPGSDVFLEPNWLSYFAEAFAELDTQQLVRDAERKFRGRRDVEEPTETMARCFMSTLASDAVSLAGTGLSGGAITLCSRRVTDRTGLRPRDRHGRAITASEARRIRPRAVRAFVDRLPRVTRRRRRPPSPAPPPEEIEEAAMEVEEPEEEEEELLDEVIRTALEAIGALQDELSGAARRHELFRFANDFYRMLLTARDAGLMGESFLRKWVLYFFLAEHIASTLYYLYSHFIANREFRRYVDVLTLQVLVVGWDVNAQQVFKRIWSEQSNPATIFETLWERILRDFLMMVERTGQFEGMDDADQQLFLSDIQYRDRSGDIEEVLKQLNLSEELIDSIDISFRIKFKGIVAIATNEEIKANLRRVLRHRREDIEAAARRGQPL.

Residues 309–318 carry the Nuclear localization signal motif; that stretch reads RLPRVTRRRR. Positions 314–340 are disordered; it reads TRRRRRPPSPAPPPEEIEEAAMEVEEP. Over residues 328-340 the composition is skewed to acidic residues; that stretch reads EEIEEAAMEVEEP. O-(5'-phospho-DNA)-serine is present on S510.

This sequence belongs to the adenoviridae terminal protein family. As to quaternary structure, heterodimer with the polymerase; this heterodimer binds to bp 9 to 18 of the genome. Interacts with host POU2F1; POU2F1 binds to the auxiliary sequences in the inverted terminal repeats and tethers the pTP-POL heterodimer to the origin DNA thereby participating in the assembly of the pre-initiation complex (POL-TP-DBP-NFIA-POU2F1). Post-translationally, preterminal protein is used to replicate viral genome, upon genomic encapsidation it is processed first into iTP and finally into TP by adenovirus protease.

The protein localises to the host nucleus matrix. In terms of biological role, protein covalently bound to the viral DNA that acts as a primer for viral genomic replication by DNA strand displacement. Assembles on the viral origin of replication in an initiation complex with viral polymerase, DBP, host NFIA and host POU2F1/OCT1. During initiation, the polymerase covalently couples the first dCTP with Ser-580 of pTP. The terminal protein stimulates the template activity over 20 fold compared to protein-free templates. Neo-synthesized viral genomes are linked to two preterminal proteins, one for each 5' end. These new genomes are encapsidated in the nucleus, and during capsid maturation by viral protease, preterminal protein is first cleaved into intermediary (iTP), then into mature TP. May play a role in host nuclear matrix localization of genomic DNA. The polypeptide is Preterminal protein (Fowl adenovirus A serotype 1 (strain CELO / Phelps) (FAdV-1)).